The chain runs to 518 residues: Bifunctional methyltransferase (518 aa).

The interval 1-300 (MQYSIKQILN…SHNRVIEISP (300 aa)) is hemK. Positions 1 to 302 (MQYSIKQILN…NRVIEISPIN (302 aa)) are RF MTase. S-adenosyl-L-methionine-binding positions include 140 to 144 (GTGSG), aspartate 163, tryptophan 192, asparagine 207, glutamate 347, glutamate 372, asparagine 399, and aspartate 421. 207–210 (NPPY) serves as a coordination point for substrate. Positions 301 to 518 (INLNRSYARR…MILQHALTGH (218 aa)) are tRNA (guanine-N(7)-)-methyltransferase. Positions 305-518 (RSYARRIGKS…MILQHALTGH (214 aa)) are tRNA MTase. Residue aspartate 421 is part of the active site. Substrate contacts are provided by lysine 425 and aspartate 457.

The protein in the C-terminal section; belongs to the class I-like SAM-binding methyltransferase superfamily. TrmB family. It in the N-terminal section; belongs to the protein N5-glutamine methyltransferase family. PrmC subfamily.

It carries out the reaction L-glutaminyl-[peptide chain release factor] + S-adenosyl-L-methionine = N(5)-methyl-L-glutaminyl-[peptide chain release factor] + S-adenosyl-L-homocysteine + H(+). It catalyses the reaction guanosine(46) in tRNA + S-adenosyl-L-methionine = N(7)-methylguanosine(46) in tRNA + S-adenosyl-L-homocysteine. Methylates the class 1 translation termination release factors RF1/PrfA and RF2/PrfB on the glutamine residue of the universally conserved GGQ motif. In terms of biological role, catalyzes the formation of N(7)-methylguanine at position 46 (m7G46) in tRNA. The chain is Bifunctional methyltransferase (prmC/trmB) from Rickettsia typhi (strain ATCC VR-144 / Wilmington).